The following is a 147-amino-acid chain: Large ribosomal subunit protein uL15 (147 aa).

The span at methionine 1–arginine 20 shows a compositional bias: basic and acidic residues. The disordered stretch occupies residues methionine 1 to leucine 64. The span at arginine 23–cysteine 33 shows a compositional bias: gly residues. Basic residues predominate over residues glycine 34–glycine 47.

The protein belongs to the universal ribosomal protein uL15 family. As to quaternary structure, part of the 50S ribosomal subunit.

Functionally, binds to the 23S rRNA. The polypeptide is Large ribosomal subunit protein uL15 (Xanthomonas campestris pv. campestris (strain 8004)).